We begin with the raw amino-acid sequence, 306 residues long: Embryogenic cell protein 40 (306 aa).

Disordered regions lie at residues 1 to 57 (MADL…ASHG), 80 to 171 (AATH…GGLG), and 188 to 306 (GTGI…PTSH). Positions 12–23 (IQLTDQHGNPVQ) are enriched in polar residues. Low complexity predominate over residues 32–44 (VHITGVATTGATT). 3 stretches are compositionally biased toward gly residues: residues 85-119 (GSHG…GTGT), 127-151 (GPTG…GTGV), and 159-171 (GPTG…GGLG). Positions 194-204 (GSAPASAGSHS) are enriched in low complexity. 2 stretches are compositionally biased toward basic and acidic residues: residues 205–218 (HAPE…EQLH) and 243–259 (KIKE…DEHT). Low complexity predominate over residues 260-278 (TVATTKTTTAAHPGGAAVA). Positions 279-298 (VEHHEHEKKSMLDKIKDKLP) are enriched in basic and acidic residues.

Belongs to the plant dehydrin family.

The polypeptide is Embryogenic cell protein 40 (ECP40) (Daucus carota (Wild carrot)).